The following is a 530-amino-acid chain: Ubiquitin carboxyl-terminal hydrolase 17-like protein 11 (530 aa).

In terms of domain architecture, USP spans Ala80–Lys375. Catalysis depends on Cys89, which acts as the Nucleophile. The active-site Proton acceptor is the His334. Basic and acidic residues-rich tracts occupy residues Ser382–Arg392 and Asp398–Pro413. Disordered stretches follow at residues Ser382–Pro413 and Arg509–Gln530. The span at Gly510–Arg524 shows a compositional bias: basic residues.

Belongs to the peptidase C19 family. USP17 subfamily.

It is found in the nucleus. The protein localises to the endoplasmic reticulum. The catalysed reaction is Thiol-dependent hydrolysis of ester, thioester, amide, peptide and isopeptide bonds formed by the C-terminal Gly of ubiquitin (a 76-residue protein attached to proteins as an intracellular targeting signal).. Functionally, deubiquitinating enzyme that removes conjugated ubiquitin from specific proteins to regulate different cellular processes that may include cell proliferation, progression through the cell cycle, apoptosis, cell migration, and the cellular response to viral infection. The sequence is that of Ubiquitin carboxyl-terminal hydrolase 17-like protein 11 (USP17L11) from Homo sapiens (Human).